The primary structure comprises 710 residues: Putative membrane protein IgaA homolog (710 aa).

Residue Met-1 is a topological domain, periplasmic. Residues Ser-2–Phe-22 traverse the membrane as a helical segment. Residues Arg-23 to Arg-204 are Cytoplasmic-facing. 2 helical membrane-spanning segments follow: residues Glu-205–Val-225 and Phe-226–Phe-246. Over Ala-247–Arg-339 the chain is Cytoplasmic. The chain crosses the membrane as a helical span at residues Ser-340–Leu-360. Residues Asp-361–Leu-656 lie on the Periplasmic side of the membrane. Residues Gly-657–Phe-677 form a helical membrane-spanning segment. The Cytoplasmic segment spans residues Arg-678–Ile-710.

It belongs to the IgaA family.

It localises to the cell inner membrane. The protein is Putative membrane protein IgaA homolog (yrfF) of Salmonella typhi.